We begin with the raw amino-acid sequence, 482 residues long: Proline--tRNA ligase (482 aa).

It belongs to the class-II aminoacyl-tRNA synthetase family. ProS type 3 subfamily. In terms of assembly, homodimer.

Its subcellular location is the cytoplasm. The enzyme catalyses tRNA(Pro) + L-proline + ATP = L-prolyl-tRNA(Pro) + AMP + diphosphate. Functionally, catalyzes the attachment of proline to tRNA(Pro) in a two-step reaction: proline is first activated by ATP to form Pro-AMP and then transferred to the acceptor end of tRNA(Pro). This Thermofilum pendens (strain DSM 2475 / Hrk 5) protein is Proline--tRNA ligase.